The sequence spans 506 residues: Fe(3+)-transport system permease protein FbpB 2 (506 aa).

12 consecutive transmembrane segments (helical) span residues 9–29 (LTLL…YVIL), 57–77 (LLMV…AFLL), 90–110 (VAMT…WISL), 116–136 (VFWG…YLPV), 174–194 (IGSS…AVSI), 218–238 (ALLS…EIFF), 275–295 (IFIL…IVGT), 314–334 (FIIS…LVWA), 350–370 (PYLL…YFSI), 379–399 (TFFV…QTTL), 428–448 (LTLP…FLNL), and 480–500 (AAAT…VFLL). In terms of domain architecture, ABC transmembrane type-1 1 spans 52–233 (LSNTMLLMVC…LMAICILIVF (182 aa)). The region spanning 310–500 (FSNSFIISGL…LFSGIPVFLL (191 aa)) is the ABC transmembrane type-1 2 domain.

The protein belongs to the binding-protein-dependent transport system permease family. FbpB subfamily. The complex is composed of two ATP-binding proteins (FbpC), two transmembrane proteins (FbpB) and a solute-binding protein (FbpA).

Its subcellular location is the cell inner membrane. Part of the ABC transporter complex FbpABC (TC 3.A.1.10.1) involved in Fe(3+) ions import. Probably responsible for the translocation of the substrate across the membrane. This chain is Fe(3+)-transport system permease protein FbpB 2 (fbpB2), found in Haemophilus influenzae (strain ATCC 51907 / DSM 11121 / KW20 / Rd).